The primary structure comprises 1546 residues: MQDISTTTASTNYLKADGDTGAVFSITSQQQQIHYMRKQKPDHEKTREELIEEINHLRAVSNSNKNARIMLDEMYQFVALLDVNGNLLDVNEPALQGGGMIRSSIQGIPFWDCRWWATSQENIDNVREAVHKASKGEFIRYETEIFGKSAGTEKITIDFSLMPLFNDKGEVSLILPEGRNITEKRLGELEIERKNNELRSLYEKIKELDELKTQFFANVSHELRTPLALIVGPTDKLLKDENVDINVRKDLEIVARNARGLLKIVNNLLDISRLEAGKMNLNYSMVNLGQTVHLIASCFEILAREKSLDFSIITPSEPMMAAIDADKMQRVITNLISNAFKFTPSGGAVKCILEKFDLSPNKPGFQIVVSDTGPGIPDNLHEIIFERFRQVDGSSTRKHGGTGLGLSIVKEFVTLHGGTVTIHNISTGGAQFTLRLPLTPNMDEHLYKKTISDQNISEIQQQLYQQQQQEQQQQQQQQQNLQQPKLILNNIDNKYKINDDDNDDDDDDDDEDGLNFNILKKTNTSSDIASNALKDNMGSIMGVHAIAQQAVEELTEKQFYQSQENIHNKPIVLVVEDNPEMNRFIAELLSKYYFVVTAFDGVEGIEKTRAITPDLIVTDCMMPRMSGDEMVEQLRSDEQFDNIPILLLTAKADENLRIKLLQNGVSDYVNKPFSSEELVARVVNLMTMKKAKQFLQEELSSANTDLQELINQLTNKKRDLQTLVGELEKERNLLNNTNKSKDEFFMNLSHELRTPLNGILGWCQLLLYDIDSGGSSGGGSGSISGDDSTVRTGLETIERCASSQNQLINDLLDMSLIIGDKFSLILGDVDLPILIENAISSILVTAQSKKISVHSNIQGEGEEESSILRNIVGDKARLQQVIWNLLSNSIKFTKEKGRIHLNLKVVNQIPSREVLGFCSNPMFNTINRHGDRWILFTITDNGKGIPKQFLPSVFDRFKQADCSSTRSYGGLGIGLSITQNIIHLHKGAVYANSEGENKGSQFTVVLPIIKGSSSSNSSPSNQLSCSSSPPLIKKPFFSQPTNYINNNNNNNNNNNNNNNNNNNNNNNNNNNNNYNNYNNNNSNNNNNSNNNNNNNNNNNNNNNNNNNNNNNNNNNLNINNLINNNHNNNNNNYHHNNNNNNNSNNNEKLGKRQREEINNNENNNVDLRLRTPPPPPTSSISENFLVNSSNLIPSPALNPINNNNNSNNNNNNIGDIKKINLEISQIPSTNLNPKLSLVINNNNNNNNNNNSLLKTIITNAINNNINNSNNDDNSNNTTIPTPPSSAINMINSLPLPSPSPSFILPTLSPFSSPLSELKSSSNNNNNNNNNSNNNNNNSMSPNLRSPKANSNKNLLGGIQIMLVDDLEETTHLFSSMLYKLGAKRIDTFQRVSDAYAFLCDSSKPQPDIILSDLTMPFEDGYSMVRKLRDREKINTQNKKTPIIALTASVSSSDKEKVLKSGFDLHCSKPVNFLELSNSILTLIEKYNTTVNIDLIKEQEQNNNNNNNNNNNNNNNNNNNNNNINNGNDDDSLLLTDSRPCKKANSQ.

Positions 36 to 63 (MRKQKPDHEKTREELIEEINHLRAVSNS) form a coiled coil. The 67-residue stretch at 65-131 (KNARIMLDEM…NIDNVREAVH (67 aa)) folds into the PAS domain. Positions 139–193 (IRYETEIFGKSAGTEKITIDFSLMPLFNDKGEVSLILPEGRNITEKRLGELEIER) constitute a PAC domain. The Histidine kinase 1 domain occupies 218 to 440 (NVSHELRTPL…QFTLRLPLTP (223 aa)). His-221 is modified (phosphohistidine; by autocatalysis). One can recognise a Response regulatory 1 domain in the interval 571–686 (IVLVVEDNPE…ELVARVVNLM (116 aa)). The residue at position 619 (Asp-619) is a 4-aspartylphosphate. Residues 747-1010 (NLSHELRTPL…QFTVVLPIIK (264 aa)) enclose the Histidine kinase 2 domain. Residue His-750 is modified to Phosphohistidine; by autocatalysis. Composition is skewed to low complexity over residues 1013–1031 (SSSN…SPPL) and 1042–1146 (NYIN…SNNN). 3 disordered regions span residues 1013–1148 (SSSN…NNEK), 1266–1285 (NNSN…PPSS), and 1313–1350 (PLSE…KANS). Low complexity predominate over residues 1313 to 1346 (PLSELKSSSNNNNNNNNNSNNNNNNSMSPNLRSP). Residues 1359–1483 (QIMLVDDLEE…ELSNSILTLI (125 aa)) form the Response regulatory 2 domain. 4-aspartylphosphate is present on Asp-1412. The disordered stretch occupies residues 1500–1546 (QNNNNNNNNNNNNNNNNNNNNNNINNGNDDDSLLLTDSRPCKKANSQ). Residues 1501–1526 (NNNNNNNNNNNNNNNNNNNNNNINNG) are compositionally biased toward low complexity.

It catalyses the reaction ATP + protein L-histidine = ADP + protein N-phospho-L-histidine.. Acts as a receptor histidine kinase for a signal transduction pathway. This protein undergoes an ATP-dependent autophosphorylation at a conserved histidine residue in the kinase core, and a phosphoryl group is then transferred to a conserved aspartate residue in the receiver domain. The chain is Hybrid signal transduction histidine kinase D (dhkD) from Dictyostelium discoideum (Social amoeba).